We begin with the raw amino-acid sequence, 199 residues long: Octanoyltransferase (199 aa).

In terms of domain architecture, BPL/LPL catalytic spans 27 to 199 (SNSCDELWLL…FVQYFLTQFK (173 aa)). Substrate contacts are provided by residues 66-73 (RGGQVTYH), 133-135 (SIG), and 146-148 (GIA). Residue cysteine 164 is the Acyl-thioester intermediate of the active site.

The protein belongs to the LipB family.

Its subcellular location is the cytoplasm. The enzyme catalyses octanoyl-[ACP] + L-lysyl-[protein] = N(6)-octanoyl-L-lysyl-[protein] + holo-[ACP] + H(+). It functions in the pathway protein modification; protein lipoylation via endogenous pathway; protein N(6)-(lipoyl)lysine from octanoyl-[acyl-carrier-protein]: step 1/2. Functionally, catalyzes the transfer of endogenously produced octanoic acid from octanoyl-acyl-carrier-protein onto the lipoyl domains of lipoate-dependent enzymes. Lipoyl-ACP can also act as a substrate although octanoyl-ACP is likely to be the physiological substrate. In Legionella pneumophila (strain Paris), this protein is Octanoyltransferase.